The primary structure comprises 430 residues: Pyrokinin-1 receptor (430 aa).

Residues 1 to 16 lie on the Extracellular side of the membrane; it reads MSAGNMSHDLGPPRDP. The N-linked (GlcNAc...) asparagine glycan is linked to N5. The helical transmembrane segment at 17-37 threads the bilayer; the sequence is LAIVIPVTVVYSLIFITGVVG. The Cytoplasmic portion of the chain corresponds to 38 to 53; the sequence is NISTCIVIKKNRSMHT. A helical transmembrane segment spans residues 54 to 74; it reads ATNYYLFSLAISDFLLLLSGV. Residues 75-96 lie on the Extracellular side of the membrane; that stretch reads PQEVSYIWSKYPYVFGEYICIG. Residues C94 and C171 are joined by a disulfide bond. The helical transmembrane segment at 97-117 threads the bilayer; it reads RGLLAETSANATVLTITAFTV. Over 118–140 the chain is Cytoplasmic; sequence ERYIAICHPFLGQAMSKLSRAIR. The chain crosses the membrane as a helical span at residues 141–161; it reads IIVLVWIMAIVTAIPQAAQFG. The Extracellular segment spans residues 162–185; the sequence is IEHYSGVEQCGIVRVIVKHSFQLS. Residues 186 to 206 traverse the membrane as a helical segment; that stretch reads TFIFFLAPMSIILVLYLLIGV. Topologically, residues 207 to 281 are cytoplasmic; that stretch reads HLYRSTLVEG…GRLNHYGTRR (75 aa). The helical transmembrane segment at 282–302 threads the bilayer; that stretch reads VLRMLVAVVVCFFLCWAPFHA. Residues 303 to 321 are Extracellular-facing; the sequence is QRLIAIYAPARGAKLRDQH. The chain crosses the membrane as a helical span at residues 322–342; sequence EFVYTVMTYVSGVLYYLSTCI. Topologically, residues 343-430 are cytoplasmic; that stretch reads NPLLYNIMSH…QYAMIGVQVN (88 aa). Over residues 388–397 the composition is skewed to polar residues; that stretch reads TNSSQTQRFS. The disordered stretch occupies residues 388 to 413; the sequence is TNSSQTQRFSIESAEQPKPSIMQNPT.

Belongs to the G-protein coupled receptor 1 family.

The protein localises to the cell membrane. Its function is as follows. Receptor for the neuropeptide CAP-3/pyrokinin-1 (TGPSASSGLWFGPRL-amide). Also activated weakly by other neuropeptides terminating in the sequence PRL-amide including pyrokinin-2, Hug-gamma, and ecdysis-triggering-hormone-1. The activity of this receptor is mediated by G proteins which activate a phosphatidyl-inositol-calcium second messenger system. This Drosophila melanogaster (Fruit fly) protein is Pyrokinin-1 receptor.